Reading from the N-terminus, the 362-residue chain is 4-hydroxy-3-methylbut-2-en-1-yl diphosphate synthase (flavodoxin) (362 aa).

The [4Fe-4S] cluster site is built by Cys-266, Cys-269, Cys-301, and Glu-308.

Belongs to the IspG family. The cofactor is [4Fe-4S] cluster.

The catalysed reaction is (2E)-4-hydroxy-3-methylbut-2-enyl diphosphate + oxidized [flavodoxin] + H2O + 2 H(+) = 2-C-methyl-D-erythritol 2,4-cyclic diphosphate + reduced [flavodoxin]. Its pathway is isoprenoid biosynthesis; isopentenyl diphosphate biosynthesis via DXP pathway; isopentenyl diphosphate from 1-deoxy-D-xylulose 5-phosphate: step 5/6. Functionally, converts 2C-methyl-D-erythritol 2,4-cyclodiphosphate (ME-2,4cPP) into 1-hydroxy-2-methyl-2-(E)-butenyl 4-diphosphate. The polypeptide is 4-hydroxy-3-methylbut-2-en-1-yl diphosphate synthase (flavodoxin) (Malacoplasma penetrans (strain HF-2) (Mycoplasma penetrans)).